Here is a 178-residue protein sequence, read N- to C-terminus: Fatty-acid and retinol-binding protein 1 (178 aa).

A signal peptide spans 1–16 (MYHQLILLALIGTIMA). Coiled coils occupy residues 67–89 (DAALEALKDKSDKLYKNAVELRN) and 129–154 (IKQAARDIIAKYQALNEETKEELKVT).

Belongs to the fatty-acid and retinol-binding protein (FARBP) family. Not glycosylated.

The protein resides in the secreted. Functionally, binds retinol and different fatty acids. This chain is Fatty-acid and retinol-binding protein 1, found in Loa loa (Eye worm).